Reading from the N-terminus, the 216-residue chain is GTP cyclohydrolase 1 (216 aa).

Cysteine 109, histidine 112, and cysteine 180 together coordinate Zn(2+).

It belongs to the GTP cyclohydrolase I family. As to quaternary structure, toroid-shaped homodecamer, composed of two pentamers of five dimers.

It carries out the reaction GTP + H2O = 7,8-dihydroneopterin 3'-triphosphate + formate + H(+). It functions in the pathway cofactor biosynthesis; 7,8-dihydroneopterin triphosphate biosynthesis; 7,8-dihydroneopterin triphosphate from GTP: step 1/1. This chain is GTP cyclohydrolase 1, found in Wigglesworthia glossinidia brevipalpis.